The primary structure comprises 1246 residues: Stromal processing peptidase, chloroplastic (1246 aa).

The transit peptide at 1 to 136 directs the protein to the chloroplast; it reads MASFPSPPLA…AKIRRRHVLH (136 aa). Histidine 228 is a Zn(2+) binding site. Glutamate 231 acts as the Proton acceptor in catalysis. Histidine 232 is a Zn(2+) binding site. Glutamate 302 is an active-site residue. A Zn(2+)-binding site is contributed by glutamate 309.

The protein belongs to the peptidase M16 family. The cofactor is Zn(2+).

The protein localises to the plastid. Its subcellular location is the chloroplast stroma. Its function is as follows. Cleaves presequences (transit peptides) from chloroplastic protein precursors. Initially recognizes a precursor by binding to the C-terminus of its transit peptide and then removes the transit peptide in a single endoproteolytic step. In a next step, pursues the cleavage of transit peptide to a subfragment form. In Oryza sativa subsp. japonica (Rice), this protein is Stromal processing peptidase, chloroplastic.